A 377-amino-acid polypeptide reads, in one-letter code: Protein RecA (377 aa).

ATP is bound at residue 82 to 89 (GPESSGKT). A disordered region spans residues 345–377 (EGSEVSANSMRPLASAARQASSRPNLSQVSANG). Residues 362–377 (RQASSRPNLSQVSANG) show a composition bias toward polar residues.

Belongs to the RecA family.

Its subcellular location is the cytoplasm. Functionally, can catalyze the hydrolysis of ATP in the presence of single-stranded DNA, the ATP-dependent uptake of single-stranded DNA by duplex DNA, and the ATP-dependent hybridization of homologous single-stranded DNAs. It interacts with LexA causing its activation and leading to its autocatalytic cleavage. This Prochlorococcus marinus (strain NATL2A) protein is Protein RecA.